We begin with the raw amino-acid sequence, 942 residues long: E3 ubiquitin-protein ligase HACE1 (942 aa).

ANK repeat units lie at residues 23 to 55 (LPDD…NSKF), 64 to 93 (VKRS…NPNY), 97 to 126 (SGCT…DVNI), 130 to 159 (EGLT…NVDV), 163 to 192 (MGQT…DINR), 196 to 226 (SGAT…YLPD), and 228 to 253 (NGIT…QYHP). A disordered region spans residues 428-459 (KGPDHQDATPTPSFAAAGTESRKELSTDTGDS). The span at 447-459 (ESRKELSTDTGDS) shows a compositional bias: basic and acidic residues. The HECT domain occupies 607–942 (NCAKLKQGIA…HCGSYGYTMA (336 aa)). The active-site Glycyl thioester intermediate is the Cys909.

The protein resides in the golgi apparatus. Its subcellular location is the golgi stack membrane. It localises to the cytoplasm. The protein localises to the endoplasmic reticulum. The catalysed reaction is S-ubiquitinyl-[E2 ubiquitin-conjugating enzyme]-L-cysteine + [acceptor protein]-L-lysine = [E2 ubiquitin-conjugating enzyme]-L-cysteine + N(6)-ubiquitinyl-[acceptor protein]-L-lysine.. It participates in protein modification; protein ubiquitination. Its function is as follows. E3 ubiquitin-protein ligase involved in Golgi membrane fusion and regulation of small GTPases. Acts as a regulator of Golgi membrane dynamics during the cell cycle: recruited to Golgi membrane by Rab proteins and regulates postmitotic Golgi membrane fusion. Acts by mediating ubiquitination during mitotic Golgi disassembly, ubiquitination serving as a signal for Golgi reassembly later, after cell division. The chain is E3 ubiquitin-protein ligase HACE1 (HACE1) from Gallus gallus (Chicken).